The following is a 304-amino-acid chain: Galactofuranosyltransferase GlfT1 (304 aa).

Belongs to the glycosyltransferase 2 family. In terms of assembly, is probably part of an AG biosynthetic complex.

It is found in the cell membrane. The protein resides in the secreted. It localises to the cell wall. It carries out the reaction alpha-L-rhamnosyl-(1-&gt;3)-N-acetyl-alpha-D-glucosaminyl-diphospho-trans,octa-cis-decaprenol + 2 UDP-alpha-D-galactofuranose = beta-D-galactofuranosyl-(1-&gt;5)-beta-D-galactofuranosyl-(1-&gt;4)-alpha-L-rhamnosyl-(1-&gt;3)-N-acetyl-alpha-D-glucosaminyl-diphospho-trans,octa-cis-decaprenol + 2 UDP + 2 H(+). Its pathway is cell wall biogenesis; cell wall polysaccharide biosynthesis. Involved in the biosynthesis of the arabinogalactan (AG) region of the mycolylarabinogalactan-peptidoglycan (mAGP) complex, an essential component of the mycobacterial cell wall. Catalyzes the transfer of the first two galactofuranosyl (Galf) units from UDP-galactofuranose (UDP-Galf) onto the rhamnosyl-GlcNAc-diphospho-decaprenol (Rha-GlcNAc-PP-C50) acceptor, yielding galactofuranosyl-galactofuranosyl-rhamnosyl-GlcNAc-diphospho-decaprenol (Galf-Galf-Rha-GlcNAc-PP-C50). Thus, GlfT1 is the initiator of galactan synthesis, while GlfT2 continues with the subsequent polymerization events. The sequence is that of Galactofuranosyltransferase GlfT1 from Mycobacterium tuberculosis (strain CDC 1551 / Oshkosh).